The chain runs to 95 residues: Aspartyl/glutamyl-tRNA(Asn/Gln) amidotransferase subunit C (95 aa).

It belongs to the GatC family. Heterotrimer of A, B and C subunits.

The catalysed reaction is L-glutamyl-tRNA(Gln) + L-glutamine + ATP + H2O = L-glutaminyl-tRNA(Gln) + L-glutamate + ADP + phosphate + H(+). It carries out the reaction L-aspartyl-tRNA(Asn) + L-glutamine + ATP + H2O = L-asparaginyl-tRNA(Asn) + L-glutamate + ADP + phosphate + 2 H(+). In terms of biological role, allows the formation of correctly charged Asn-tRNA(Asn) or Gln-tRNA(Gln) through the transamidation of misacylated Asp-tRNA(Asn) or Glu-tRNA(Gln) in organisms which lack either or both of asparaginyl-tRNA or glutaminyl-tRNA synthetases. The reaction takes place in the presence of glutamine and ATP through an activated phospho-Asp-tRNA(Asn) or phospho-Glu-tRNA(Gln). The chain is Aspartyl/glutamyl-tRNA(Asn/Gln) amidotransferase subunit C from Clostridium botulinum (strain Loch Maree / Type A3).